We begin with the raw amino-acid sequence, 387 residues long: Phosphoglycerate kinase (387 aa).

Substrate-binding positions include 21–23 (DLN), Arg36, 59–62 (HLGR), Arg113, and Arg146. ATP contacts are provided by residues Lys197, Glu314, and 340 to 343 (GGDT).

It belongs to the phosphoglycerate kinase family. In terms of assembly, monomer.

The protein localises to the cytoplasm. It carries out the reaction (2R)-3-phosphoglycerate + ATP = (2R)-3-phospho-glyceroyl phosphate + ADP. It functions in the pathway carbohydrate degradation; glycolysis; pyruvate from D-glyceraldehyde 3-phosphate: step 2/5. The sequence is that of Phosphoglycerate kinase from Pseudomonas savastanoi pv. phaseolicola (strain 1448A / Race 6) (Pseudomonas syringae pv. phaseolicola (strain 1448A / Race 6)).